The chain runs to 274 residues: Dermonecrotic toxin SdSicTox-betaIIB1biii (274 aa).

His-5 is an active-site residue. Glu-25 and Asp-27 together coordinate Mg(2+). The active-site Nucleophile is the His-41. 2 disulfides stabilise this stretch: Cys-45/Cys-51 and Cys-47/Cys-190. Residue Asp-85 participates in Mg(2+) binding.

Belongs to the arthropod phospholipase D family. Class II subfamily. Requires Mg(2+) as cofactor. Expressed by the venom gland.

Its subcellular location is the secreted. It carries out the reaction an N-(acyl)-sphingosylphosphocholine = an N-(acyl)-sphingosyl-1,3-cyclic phosphate + choline. The catalysed reaction is an N-(acyl)-sphingosylphosphoethanolamine = an N-(acyl)-sphingosyl-1,3-cyclic phosphate + ethanolamine. It catalyses the reaction a 1-acyl-sn-glycero-3-phosphocholine = a 1-acyl-sn-glycero-2,3-cyclic phosphate + choline. The enzyme catalyses a 1-acyl-sn-glycero-3-phosphoethanolamine = a 1-acyl-sn-glycero-2,3-cyclic phosphate + ethanolamine. Functionally, dermonecrotic toxins cleave the phosphodiester linkage between the phosphate and headgroup of certain phospholipids (sphingolipid and lysolipid substrates), forming an alcohol (often choline) and a cyclic phosphate. This toxin acts on sphingomyelin (SM). It may also act on ceramide phosphoethanolamine (CPE), lysophosphatidylcholine (LPC) and lysophosphatidylethanolamine (LPE), but not on lysophosphatidylserine (LPS), and lysophosphatidylglycerol (LPG). It acts by transphosphatidylation, releasing exclusively cyclic phosphate products as second products. Induces dermonecrosis, hemolysis, increased vascular permeability, edema, inflammatory response, and platelet aggregation. The polypeptide is Dermonecrotic toxin SdSicTox-betaIIB1biii (Sicarius cf. damarensis (strain GJB-2008) (Six-eyed sand spider)).